A 308-amino-acid polypeptide reads, in one-letter code: Mitochondrial import receptor subunit TOM40B (308 aa).

Residues 1–29 (MGNTLGLAPMGTLPRRSPRREEPLPNPGS) form a disordered region. A required for mitochondrial targeting region spans residues 281–308 (PLPVTLALGAFLNHWRNRFHCGFSITVG).

This sequence belongs to the Tom40 family. In terms of assembly, forms part of the preprotein translocase of the outer mitochondrial membrane (TOM complex) containing TOMM22, TOMM40, TOMM40L and TOMM70. Interacts with mitochondrial targeting sequences.

The protein localises to the mitochondrion outer membrane. Its function is as follows. Potential channel-forming protein implicated in import of protein precursors into mitochondria. The chain is Mitochondrial import receptor subunit TOM40B (TOMM40L) from Homo sapiens (Human).